Here is a 416-residue protein sequence, read N- to C-terminus: Putative competence-damage inducible protein (416 aa).

This sequence belongs to the CinA family.

The sequence is that of Putative competence-damage inducible protein from Bacillus velezensis (strain DSM 23117 / BGSC 10A6 / LMG 26770 / FZB42) (Bacillus amyloliquefaciens subsp. plantarum).